Here is a 366-residue protein sequence, read N- to C-terminus: Phenylalanine dehydrogenase (366 aa).

Arginine 45 serves as a coordination point for NAD(+). Residue lysine 69 participates in L-phenylalanine binding. The active site involves lysine 81. Residues aspartate 116, threonine 151, 181-187, 204-205, 241-242, and 262-264 each bind NAD(+); these read GVGKVGE, DI, AK, and SAN. Position 264 (asparagine 264) interacts with L-phenylalanine.

This sequence belongs to the Glu/Leu/Phe/Val dehydrogenases family.

The catalysed reaction is L-phenylalanine + NAD(+) + H2O = 3-phenylpyruvate + NH4(+) + NADH + H(+). The protein operates within amino-acid biosynthesis; L-phenylalanine biosynthesis; L-phenylalanine from phenylpyruvate (PDH route): step 1/1. Catalyzes the reversible NAD(+)-dependent oxidative deamination of L-phenylalanine to phenylpyruvate. This Thermoactinomyces intermedius protein is Phenylalanine dehydrogenase.